The following is a 280-amino-acid chain: Acetyl-coenzyme A carboxylase carboxyl transferase subunit beta (280 aa).

The region spanning 28–280 is the CoA carboxyltransferase N-terminal domain; that stretch reads IMTKCPSCRT…TLTKLLAMHQ (253 aa). Residues Cys-32, Cys-35, Cys-51, and Cys-54 each coordinate Zn(2+). The segment at 32-54 adopts a C4-type zinc-finger fold; it reads CPSCRTIMYTKDLKKNLSVCRTC.

The protein belongs to the AccD/PCCB family. In terms of assembly, acetyl-CoA carboxylase is a heterohexamer composed of biotin carboxyl carrier protein (AccB), biotin carboxylase (AccC) and two subunits each of ACCase subunit alpha (AccA) and ACCase subunit beta (AccD). Zn(2+) serves as cofactor.

It localises to the cytoplasm. It catalyses the reaction N(6)-carboxybiotinyl-L-lysyl-[protein] + acetyl-CoA = N(6)-biotinyl-L-lysyl-[protein] + malonyl-CoA. Its pathway is lipid metabolism; malonyl-CoA biosynthesis; malonyl-CoA from acetyl-CoA: step 1/1. Component of the acetyl coenzyme A carboxylase (ACC) complex. Biotin carboxylase (BC) catalyzes the carboxylation of biotin on its carrier protein (BCCP) and then the CO(2) group is transferred by the transcarboxylase to acetyl-CoA to form malonyl-CoA. In Shouchella clausii (strain KSM-K16) (Alkalihalobacillus clausii), this protein is Acetyl-coenzyme A carboxylase carboxyl transferase subunit beta.